The following is a 624-amino-acid chain: Phragmoplastin DRP1E (624 aa).

N-acetylthreonine is present on threonine 2. Positions 37–306 (WEALPTVAVV…LESVIRTRIP (270 aa)) constitute a Dynamin-type G domain. The segment at 47-54 (GGQSSGKS) is G1 motif. Position 50–55 (50–55 (SSGKSS)) interacts with GTP. A G2 motif region spans residues 73-75 (VTR). The tract at residues 148-151 (DLPG) is G3 motif. The tract at residues 217–220 (TKLD) is G4 motif. Residues 218–223 (KLDLMD) and 248–251 (NRSQ) contribute to the GTP site. Positions 247-250 (VNRS) are G5 motif. The region spanning 532 to 624 (FRRIASNVSA…DEIDAVAWVR (93 aa)) is the GED domain.

This sequence belongs to the TRAFAC class dynamin-like GTPase superfamily. Dynamin/Fzo/YdjA family. As to quaternary structure, forms homodimer and may homooligomerize and heterooligomerize to form the phragmoplastin complex. Binds to PHIP1. Ubiquitous.

The protein resides in the cytoplasm. The protein localises to the cytoskeleton. It is found in the phragmoplast. The catalysed reaction is GTP + H2O = GDP + phosphate + H(+). Functionally, microtubule-associated force-producing protein that is targeted to the tubulo-vesicular network of the forming cell plate during cytokinesis. Also plays a major role in plasma membrane maintenance and cell wall integrity with an implication in vesicular trafficking, polar cell expansion, and other aspects of plant growth and development. Has a GTPase activity. The polypeptide is Phragmoplastin DRP1E (Arabidopsis thaliana (Mouse-ear cress)).